The sequence spans 600 residues: MSDETVSRSQFSLKTYAVRVFALPVSWYYSLSQIKFSPVAKKLFMVTAVSAVSVIFLAHHFKRRRGKQKGKVLPWEPEHLLLEHTRRAASEKGSSCSSSRQNLTLSLSSTKEKGSQCCNYPNGGLLSRYSGSAQSLGSVQSVNSCHSCACGNSNSWDKADDDDIRLVNIPVTTPENLYLMGMELFEEALRRWEQALTFRSRQAEDEACSSVKLGAGDAIAEESVDDIISSEFIHKLEALLQRAYRLQEEFEATLGGSDPNSIANDTDKDTDMSLRETMDELGLPDAMNMDSADLFASATELAEQREAQQTFSLESFCPCPFYEEAMHLVEEGKIYSRVLRTEMLECLGDSDFLAKLHCIRQAFQLILAEADNRSFLAESGRKILSALIVKARKNPKKFQDVFDEMINFLEQTDHWDSTELELAARGVKNLNFYDVVLDFILMDSFEDLENPPTSIQSVVNNRWLNSSFKESAVASSCWSVLKQKRQQMKISDGFFAHFYAICEHVSPVLAWGFLGPRNSLYDLCCFFKNQVLFFLKDIFDFEKVRYSSIDTLAEDLTHLLIRRTELLVTCLGADALRHATTCTSGHSHAVPTALLEAKVQ.

2 helical membrane-spanning segments follow: residues 15-32 and 38-58; these read TYAVRVFALPVSWYYSLS and PVAKKLFMVTAVSAVSVIFLA. Phosphoserine occurs at positions 257 and 261.

It belongs to the mitoguardin family. In terms of assembly, homodimer and heterodimer; forms heterodimers with MIGA2. Interacts with PLD6/MitoPLD.

It is found in the mitochondrion outer membrane. Functionally, regulator of mitochondrial fusion. Acts by forming homo- and heterodimers at the mitochondrial outer membrane and facilitating the formation of PLD6/MitoPLD dimers. May act by regulating phospholipid metabolism via PLD6/MitoPLD. The protein is Mitoguardin 1 of Mus musculus (Mouse).